A 1040-amino-acid polypeptide reads, in one-letter code: Multidrug resistance protein MdtB (1040 aa).

The next 12 helical transmembrane spans lie at 16 to 36 (FIMRPVATTLLMVAILLAGII), 347 to 367 (LMMAIALVVMIIYLFLRNIPA), 369 to 389 (IIPGVAVPLSLIGTFAVMVFL), 396 to 416 (LTLMALTIATGFVVDDAIVVI), 440 to 460 (IGFTIISLIFSLIAVLIPLLF), 472 to 492 (FAITLAVAILISAVVSLTLTP), 537 to 557 (WLTLSVALSTLLLSVLLWVFI), 863 to 883 (LGSTVWLIVAAVVAMYIVLGI), 888 to 908 (FIHPITILSTLPTAGVGALLA), 911 to 931 (IAGSELDVIAIIGIILLIGIV), 968 to 988 (ILMTTLAALLGALPLMLSTGV), and 998 to 1018 (IGMVGGLIVSQVLTLFTTPVI).

This sequence belongs to the resistance-nodulation-cell division (RND) (TC 2.A.6) family. MdtB subfamily. As to quaternary structure, part of a tripartite efflux system composed of MdtA, MdtB and MdtC. MdtB forms a heteromultimer with MdtC.

The protein localises to the cell inner membrane. The protein is Multidrug resistance protein MdtB of Shigella boydii serotype 4 (strain Sb227).